The sequence spans 338 residues: GTPase Obg (338 aa).

Positions 1 to 159 (MKFVDSASVF…FTLDLELKLM (159 aa)) constitute an Obg domain. Residues 123–145 (GGRGNQHFATSTHQAPRHAEPGQ) form a disordered region. The 164-residue stretch at 160-323 (ADVGLVGFPN…LKDALWRIIV (164 aa)) folds into the OBG-type G domain. Residues 166 to 173 (GFPNAGKS), 191 to 195 (FTTLV), 213 to 216 (DIPG), 280 to 283 (TKMD), and 304 to 306 (SAV) contribute to the GTP site. Residues serine 173 and threonine 193 each coordinate Mg(2+).

It belongs to the TRAFAC class OBG-HflX-like GTPase superfamily. OBG GTPase family. Monomer. Mg(2+) is required as a cofactor.

Its subcellular location is the cytoplasm. An essential GTPase which binds GTP, GDP and possibly (p)ppGpp with moderate affinity, with high nucleotide exchange rates and a fairly low GTP hydrolysis rate. Plays a role in control of the cell cycle, stress response, ribosome biogenesis and in those bacteria that undergo differentiation, in morphogenesis control. The protein is GTPase Obg of Chlorobium chlorochromatii (strain CaD3).